The sequence spans 145 residues: MYPVHLLVLLAVCVSLLGASNIPPQPLNLYQFGNMIQCANHGRRPTQHYTDYGCYCGKGGSGTPVDELDRCCKTHDDCYTEAGKKGCYPKLTLYSWKCTGKAPTCNSKTGCKRTVCDCDATAAKCFAKAPYNNKNYNIDTKKRCQ.

An N-terminal signal peptide occupies residues 1 to 19 (MYPVHLLVLLAVCVSLLGA). The propeptide occupies 20–27 (SNIPPQPL). Intrachain disulfides connect C38–C98, C54–C144, C56–C72, C71–C125, C78–C118, C87–C111, and C105–C116. Ca(2+) contacts are provided by Y55, G57, and G59. H75 is a catalytic residue. D76 is a Ca(2+) binding site. The active site involves D119.

It belongs to the phospholipase A2 family. Group I subfamily. D49 sub-subfamily. Requires Ca(2+) as cofactor. Expressed by the venom gland.

The protein resides in the secreted. The enzyme catalyses a 1,2-diacyl-sn-glycero-3-phosphocholine + H2O = a 1-acyl-sn-glycero-3-phosphocholine + a fatty acid + H(+). Snake venom phospholipase A2 (PLA2) that inhibits collagen-induced platelet aggregation. PLA2 catalyzes the calcium-dependent hydrolysis of the 2-acyl groups in 3-sn-phosphoglycerides. The chain is Basic phospholipase A2 S11-61 from Austrelaps superbus (Lowland copperhead snake).